Reading from the N-terminus, the 344-residue chain is Uroporphyrinogen decarboxylase (344 aa).

Substrate-binding positions include Arg-25–Arg-29, Asp-75, Tyr-152, Ser-207, and His-323.

It belongs to the uroporphyrinogen decarboxylase family. Homodimer.

It is found in the cytoplasm. The catalysed reaction is uroporphyrinogen III + 4 H(+) = coproporphyrinogen III + 4 CO2. Its pathway is porphyrin-containing compound metabolism; protoporphyrin-IX biosynthesis; coproporphyrinogen-III from 5-aminolevulinate: step 4/4. Its function is as follows. Catalyzes the decarboxylation of four acetate groups of uroporphyrinogen-III to yield coproporphyrinogen-III. The polypeptide is Uroporphyrinogen decarboxylase (Roseobacter denitrificans (strain ATCC 33942 / OCh 114) (Erythrobacter sp. (strain OCh 114))).